The primary structure comprises 97 residues: Large ribosomal subunit protein uL23 (97 aa).

This sequence belongs to the universal ribosomal protein uL23 family. In terms of assembly, part of the 50S ribosomal subunit. Contacts protein L29, and trigger factor when it is bound to the ribosome.

In terms of biological role, one of the early assembly proteins it binds 23S rRNA. One of the proteins that surrounds the polypeptide exit tunnel on the outside of the ribosome. Forms the main docking site for trigger factor binding to the ribosome. The chain is Large ribosomal subunit protein uL23 from Brucella canis (strain ATCC 23365 / NCTC 10854 / RM-666).